The sequence spans 375 residues: Cinnamyl alcohol dehydrogenase 3 (375 aa).

Residue C44 coordinates Zn(2+). S46 is an NADP(+) binding site. The Zn(2+) site is built by H66, E67, C97, C100, C103, C111, and C160. NADP(+)-binding positions include T164, 186-191 (GLGGLG), 209-214 (SRSSEK), T249, G273, and 296-298 (SQI).

Belongs to the zinc-containing alcohol dehydrogenase family. As to quaternary structure, homodimer. It depends on Zn(2+) as a cofactor. In terms of tissue distribution, expressed in the root tips. Expressed in the apical meristematic regions, leaf veins and at the base of the trichomes. Expressed at the base of the stems. Expressed in the abscission zones of newly formed siliques.

It catalyses the reaction (E)-cinnamyl alcohol + NADP(+) = (E)-cinnamaldehyde + NADPH + H(+). It carries out the reaction (E)-coniferol + NADP(+) = (E)-coniferaldehyde + NADPH + H(+). The enzyme catalyses (E)-sinapyl alcohol + NADP(+) = (E)-sinapaldehyde + NADPH + H(+). The catalysed reaction is (E)-4-coumaroyl alcohol + NADP(+) = (E)-4-coumaraldehyde + NADPH + H(+). It catalyses the reaction (E)-caffeyl alcohol + NADP(+) = (E)-caffeyl aldehyde + NADPH + H(+). It functions in the pathway aromatic compound metabolism; phenylpropanoid biosynthesis. Involved in lignin biosynthesis. Catalyzes the final step specific for the production of lignin monomers. Catalyzes the NADPH-dependent reduction of coniferaldehyde, 5-hydroxyconiferaldehyde, sinapaldehyde, 4-coumaraldehyde and caffeyl aldehyde to their respective alcohols. In Arabidopsis thaliana (Mouse-ear cress), this protein is Cinnamyl alcohol dehydrogenase 3.